The primary structure comprises 211 residues: Regulator of G-protein signaling 2 (211 aa).

Disordered regions lie at residues 14 to 33 (GPMDKGAGTGPKNEEKREKM) and 49 to 71 (LQNSSSPGKPKTGKKSKQQTFIK). The segment at 32–66 (KMKRTLLKDWKSRLSYFLQNSSSPGKPKTGKKSKQ) is necessary for membrane association. The necessary to inhibit protein synthesis stretch occupies residues 79–116 (LWSEAFDELLASKYGLAAFRAFLKSEFCEENIEFWLAC). In terms of domain architecture, RGS spans 83–199 (AFDELLASKY…LESEFYQDLC (117 aa)).

Interacts with GNAQ. Does not interact with GNAI1 and GNAI3. Interacts with EIF2B5. Interacts with PRKG1 (isoform alpha). Post-translationally, phosphorylated by protein kinase C. Phosphorylation by PRKG1 leads to activation of RGS2 activity.

The protein resides in the cell membrane. It is found in the cytoplasm. The protein localises to the nucleus. It localises to the nucleolus. Its function is as follows. Regulates G protein-coupled receptor signaling cascades. Inhibits signal transduction by increasing the GTPase activity of G protein alpha subunits, thereby driving them into their inactive GDP-bound form. It is involved in the negative regulation of the angiotensin-activated signaling pathway. Plays a role in the regulation of blood pressure in response to signaling via G protein-coupled receptors and GNAQ. Plays a role in regulating the constriction and relaxation of vascular smooth muscle. Binds EIF2B5 and blocks its activity, thereby inhibiting the translation of mRNA into protein. This Bos taurus (Bovine) protein is Regulator of G-protein signaling 2 (RGS2).